Reading from the N-terminus, the 379-residue chain is MLAARRLLRSPRITGALSWSRWSSDAAKATTETSALLQNAEKRQQLLNELSEPLEQKGRPAIDPKETSVMLFPGQGTQYVGMAKDLLRFPGARRIFELANEVLKYDLLKICLEGPREKLNRTEHAQLAVMVSSLAALEQLREERPKAIETCVAAAGFSLGEITALVYADALPFDKALRLVQVRATAMQAACDQAAGAMAMTLYGPDTNLGEACARAQQWCLDKGVESPYCGIANYMYPHCKVVAGNVEALEFLEQNAKSFKIRRMKRLAVSGAFHTPLMQSAVEPFTKALKTVRLQDPVIRVYSNVDGKPYRHAKHILTQLPKQIVRPVKWEQTLHEMYERKQGVDFPRTFECGPGKGLVQVLEKVNAKAAQSSFNVIA.

The transit peptide at 1-23 (MLAARRLLRSPRITGALSWSRWS) directs the protein to the mitochondrion. Catalysis depends on residues Ser158 and His275.

It belongs to the type II malonyltransferase family.

The protein resides in the mitochondrion. The catalysed reaction is holo-[ACP] + malonyl-CoA = malonyl-[ACP] + CoA. It functions in the pathway lipid metabolism; fatty acid biosynthesis. Catalyzes the transfer of a malonyl moiety from malonyl-CoA to the free thiol group of the phosphopantetheine arm of the ACP protein. This suggests the existence of the biosynthesis of fatty acids in mitochondria. The sequence is that of Probable malonyl-CoA-acyl carrier protein transacylase, mitochondrial from Drosophila melanogaster (Fruit fly).